The following is a 115-amino-acid chain: Promotilin (115 aa).

Residues 1 to 25 (MLSRKATAVLLAVHAAAMLASQTEA) form the signal peptide. Residues 43 to 72 (RYKGQKKSLSVQQRSEEVGPVDPTEPWEEK) are disordered.

The protein belongs to the motilin family.

It is found in the secreted. In terms of biological role, plays an important role in the regulation of interdigestive gastrointestinal motility and indirectly causes rhythmic contraction of duodenal and colonic smooth muscle. In Bos taurus (Bovine), this protein is Promotilin (MLN).